Here is a 4007-residue protein sequence, read N- to C-terminus: PKS-NRPS hybrid synthetase psoA (4007 aa).

A Ketosynthase family 3 (KS3) domain is found at 8–444 (KEPIAIIGTG…GTNCHAIVES (437 aa)). Residues Cys-182, His-321, and His-364 each act as for beta-ketoacyl synthase activity in the active site. Residues 575-897 (VFTGQGAQWA…VLDRKADDIL (323 aa)) are malonyl-CoA:ACP transacylase (MAT) domain. The N-terminal hotdog fold stretch occupies residues 969-1105 (HPLLGSRTPD…GHIRITLAAE (137 aa)). The segment at 969–1147 (HPLLGSRTPD…LSYSGPFRAM (179 aa)) is dehydratase (DH) domain. A PKS/mFAS DH domain is found at 969 to 1276 (HPLLGSRTPD…MSSFLPASEK (308 aa)). The active-site Proton acceptor; for dehydratase activity is His-1001. A C-terminal hotdog fold region spans residues 1120–1276 (DLLPTSVDRF…MSSFLPASEK (157 aa)). The active-site Proton donor; for dehydratase activity is the Asp-1179. The interval 2131–2305 (TYLLVGLTGH…PASVIDIGMV (175 aa)) is ketoreductase (KR) domain. Residues 2418 to 2495 (EARKVMENAL…QICDEVVASL (78 aa)) enclose the Carrier 1 domain. Ser-2455 carries the O-(pantetheine 4'-phosphoryl)serine modification. The interval 2513–2550 (PAHKLRPWDKPSADTKRTDSIAPVPRSQIAANGPNGLP) is disordered. The segment covering 2518-2531 (RPWDKPSADTKRTD) has biased composition (basic and acidic residues). Residues 2589-2885 (QPLSLGQSRL…LETIPLWFKV (297 aa)) are condensation (C) domain. Positions 3076–3478 (TYVQLAERAN…LGDVARALVQ (403 aa)) are adenylation (A) domain. The Carrier 2 domain maps to 3576 to 3652 (TPTEARLRDV…LLAARLDGTS (77 aa)). Position 3612 is an O-(pantetheine 4'-phosphoryl)serine (Ser-3612). The interval 3696–3920 (LTGATGFLGG…INVETVSNNI (225 aa)) is reductase (R) domain.

It in the C-terminal section; belongs to the NRP synthetase family.

The protein operates within secondary metabolite biosynthesis. Functionally, PKS-NRPS hybrid synthetase; part of the gene cluster that mediates the biosynthesis of pseurotin A, a competitive inhibitor of chitin synthase and an inducer of nerve-cell proliferation. The PKS-NRPS hybrid synthetase psoA is responsible for the biosynthesis of azaspirene, one of the first intermediates having the 1-oxa-7-azaspiro[4,4]-non-2-ene-4,6-dione core of pseurotin, via condensation of one acetyl-CoA, 4 malonyl-CoA, and a L-phenylalanine molecule. The dual-functional monooxygenase/methyltransferase psoF seems to be involved in the addition of the C3 methyl group onto the pseurotin scaffold. Azaspirene is then converted to synerazol through 4 steps including oxidation of C17 by the cytochrome P450 monooxygenase psoD, O-methylation of the hydroxy group of C8 by the methyltransferase psoC, and the trans-to-cis isomerization of the C13 olefin by the glutathione S-transferase psoE. The fourth step of synerazol production is performed by the dual-functional monooxygenase/methyltransferase psoF which seems to catalyze the epoxidation of the intermediate deepoxy-synerazol. Synerazol can be attacked by a water molecule nonenzymatically at two different positions to yield two diol products, pseurotin A and pseurotin D. The sequence is that of PKS-NRPS hybrid synthetase psoA from Aspergillus fumigatus (strain ATCC MYA-4609 / CBS 101355 / FGSC A1100 / Af293) (Neosartorya fumigata).